We begin with the raw amino-acid sequence, 295 residues long: Methionine aminopeptidase (295 aa).

Histidine 62 is a binding site for substrate. 3 residues coordinate a divalent metal cation: aspartate 82, aspartate 93, and histidine 153. Substrate is bound at residue histidine 161. A divalent metal cation contacts are provided by glutamate 187 and glutamate 280.

This sequence belongs to the peptidase M24A family. Methionine aminopeptidase archaeal type 2 subfamily. As to quaternary structure, monomer. Requires Co(2+) as cofactor. The cofactor is Zn(2+). Mn(2+) serves as cofactor. It depends on Fe(2+) as a cofactor.

It carries out the reaction Release of N-terminal amino acids, preferentially methionine, from peptides and arylamides.. In terms of biological role, removes the N-terminal methionine from nascent proteins. The N-terminal methionine is often cleaved when the second residue in the primary sequence is small and uncharged (Met-Ala-, Cys, Gly, Pro, Ser, Thr, or Val). The sequence is that of Methionine aminopeptidase from Pyrococcus horikoshii (strain ATCC 700860 / DSM 12428 / JCM 9974 / NBRC 100139 / OT-3).